Consider the following 109-residue polypeptide: Spermidine export protein MdtI (109 aa).

4 consecutive transmembrane segments (helical) span residues 6–26 (WVHA…NVFL), 36–56 (FYGI…SQAV), 64–84 (AYAL…WVLF), and 88–108 (LNNK…MIKL).

The protein belongs to the drug/metabolite transporter (DMT) superfamily. Small multidrug resistance (SMR) (TC 2.A.7.1) family. MdtI subfamily. Forms a complex with MdtJ.

It localises to the cell inner membrane. Its function is as follows. Catalyzes the excretion of spermidine. This Citrobacter koseri (strain ATCC BAA-895 / CDC 4225-83 / SGSC4696) protein is Spermidine export protein MdtI.